The primary structure comprises 507 residues: Cysteine--tRNA ligase (507 aa).

Cys29 contributes to the Zn(2+) binding site. The short motif at 31–41 is the 'HIGH' region element; sequence PTVYDVPHIGN. The Zn(2+) site is built by Cys207, His232, and Glu236. A 'KMSKS' region motif is present at residues 265–269; sequence KMSKS. An ATP-binding site is contributed by Lys268.

This sequence belongs to the class-I aminoacyl-tRNA synthetase family. Monomer. The cofactor is Zn(2+).

The protein resides in the cytoplasm. It carries out the reaction tRNA(Cys) + L-cysteine + ATP = L-cysteinyl-tRNA(Cys) + AMP + diphosphate. This chain is Cysteine--tRNA ligase, found in Neorickettsia sennetsu (strain ATCC VR-367 / Miyayama) (Ehrlichia sennetsu).